The primary structure comprises 616 residues: MASDGDGAAAVAALGISGGGGDDWAPPLRRNLPLLAPHEVKLAKLLLSEGQSHLFEHWPEPGVDDDKKRNFFDQVCRLNSSYPGGLASYIQNARKLLADSKAGKNPYDGFSPSVPSGEVLTFGDDNFVSLEEAGVKEARHAAFVLVAGGLGERLGYKGIKVALPRETTTGKCFLQHYIESILALQEASCKLVEGECNTKIPFVIMTSDDTNALTVKLLESNSYFGMEPSQVHILKQEKVACLADNDARLALDPNDKYKIQTKPHGHGDVHALLYSSGLLEQWKSTGRKWVLFFQDTNGLLFNAIPSALGVSATKGYNVNSLAVPRKAKEAIGGITKLTHVDGRTMVINVEYNQLDPLLRATGHPDGDANCETGYSPYPGNINQLILEIGPYMEELQKTHGAISEFVNPKYTDSTKTAFKSSTRLECMMQDYPKTLPPSAKVGFTVMDAWLTYAPVKNNPEDSAKVPKGNPYHSATSGEMAIYRANSLILRKAGAQIADPVIDTFNGQEVEVWPRITWIPRWGLIFKDVKAKVHSNSSVSQRSALVINGKNITIQGLSLDGTLIVNAKDEAKFNVTGHIENKGWTIQHVDHKDTSEKEEIRIRGFKFNKVEQLELNY.

It belongs to the USP family. The cofactor is Mg(2+). Requires Mn(2+) as cofactor.

It catalyses the reaction a monosaccharide 1-phosphate + UTP + H(+) = a UDP-monosaccharide + diphosphate. In terms of biological role, may function as the terminal enzyme of the myo-inositol oxidation (MIO) pathway. May also play a role in the salvage pathway for synthesis of nucleotide sugars. This Oryza sativa subsp. japonica (Rice) protein is UDP-sugar pyrophosphorylase (USP).